The following is a 317-amino-acid chain: Dehydrogenase/reductase SDR family member 12 (317 aa).

NAD(+) is bound by residues S50 and I52. Position 175 (S175) interacts with substrate. 3 residues coordinate NAD(+): Y201, K205, and T234. Residue Y201 is the Proton acceptor of the active site.

The protein belongs to the short-chain dehydrogenases/reductases (SDR) family.

In terms of biological role, putative oxidoreductase. The chain is Dehydrogenase/reductase SDR family member 12 (DHRS12) from Bos taurus (Bovine).